The chain runs to 420 residues: Melatonin receptor type 1C (420 aa).

Residues 1–34 lie on the Extracellular side of the membrane; sequence MMEVNSTCLDCRTPGTIRTEQDAQDSASQGLTSA. Asn5 carries N-linked (GlcNAc...) asparagine glycosylation. The helical transmembrane segment at 35-55 threads the bilayer; it reads LAVVLIFTIVVDVLGNILVIL. The Cytoplasmic portion of the chain corresponds to 56 to 73; the sequence is SVLRNKKLQNAGNLFVVS. The helical transmembrane segment at 74-94 threads the bilayer; the sequence is LSIADLVVAVYPYPVILIAIF. Over 95–106 the chain is Extracellular; sequence QNGWTLGNIHCQ. Cysteines 105 and 182 form a disulfide. The chain crosses the membrane as a helical span at residues 107–127; the sequence is ISGFLMGLSVIGSVFNITAIA. The Cytoplasmic portion of the chain corresponds to 128-152; the sequence is INRYCYICHSLRYDKLYNQRSTWCY. A helical membrane pass occupies residues 153 to 173; the sequence is LGLTWILTIIAIVPNFFVGSL. Residues 174–192 lie on the Extracellular side of the membrane; sequence QYDPRIFSCTFAQTVSSSY. A helical membrane pass occupies residues 193–213; sequence TITVVVVHFIVPLSVVTFCYL. Over 214–245 the chain is Cytoplasmic; the sequence is RIWVLVIQVKHRVRQDFKQKLTQTDLRNFLTM. Residues 246-266 form a helical membrane-spanning segment; that stretch reads FVVFVLFAVCWAPLNFIGLAV. Residues 267–279 are Extracellular-facing; that stretch reads AINPFHVAPKIPE. The chain crosses the membrane as a helical span at residues 280–303; it reads WLFVLSYFMAYFNSCLNAVIYGVL. The Cytoplasmic segment spans residues 304-420; it reads NQNFRKEYKR…ELCKDGISQR (117 aa).

It belongs to the G-protein coupled receptor 1 family. Moderately expressed in dermal melanophores.

It localises to the cell membrane. Functionally, high affinity receptor for melatonin. Likely to mediate the potent effects of melatonin on pigment aggregation in melanophores. The activity of this receptor is mediated by pertussis toxin sensitive G proteins that inhibit adenylate cyclase activity. The chain is Melatonin receptor type 1C (mtnr1c) from Xenopus laevis (African clawed frog).